Reading from the N-terminus, the 180-residue chain is Protein SPO16 homolog (180 aa).

In terms of assembly, homooligomer. Interacts with SHOC, SYCP1 and SYCE3.

It localises to the chromosome. Functionally, plays a key role in reinforcing the integrity of the central element of the synaptonemal complex (SC) thereby stabilizing SC, ensuring progression of meiotic prophase I in male and female germ cells. Promotes homologous recombination and crossing-over in meiotic prophase I via its association with SHOC1. Required for the localization of TEX11 and MSH4 to recombination intermediates. This Homo sapiens (Human) protein is Protein SPO16 homolog.